Here is a 207-residue protein sequence, read N- to C-terminus: MAKLDVFDIKNKKVGEIELSDSVFNDEVKEYLIHEAVKIQLANRRAGTVGVKNRSAVAGSGKKPFKQKGTGQARQGCRRAPQYPGGGVAFGPQAKTYNLSMNKKARRAAMRSALSLLFKNNKLTVLNNIDLDNVSTKNFVGILNGFTLDKTLVVTDVENRNLELSARNVKNVKVLKSEGLNIFDIMKYQSVIFTENSVRKVEGALQS.

Residues 58 to 85 form a disordered region; the sequence is AGSGKKPFKQKGTGQARQGCRRAPQYPG.

It belongs to the universal ribosomal protein uL4 family. In terms of assembly, part of the 50S ribosomal subunit.

One of the primary rRNA binding proteins, this protein initially binds near the 5'-end of the 23S rRNA. It is important during the early stages of 50S assembly. It makes multiple contacts with different domains of the 23S rRNA in the assembled 50S subunit and ribosome. In terms of biological role, forms part of the polypeptide exit tunnel. The protein is Large ribosomal subunit protein uL4 of Geotalea uraniireducens (strain Rf4) (Geobacter uraniireducens).